The sequence spans 433 residues: Trigger factor (433 aa).

The 86-residue stretch at 166–251 folds into the PPIase FKBP-type domain; sequence GDFAVIDFEG…LHEIQERAKP (86 aa).

The protein belongs to the FKBP-type PPIase family. Tig subfamily.

It is found in the cytoplasm. It carries out the reaction [protein]-peptidylproline (omega=180) = [protein]-peptidylproline (omega=0). Involved in protein export. Acts as a chaperone by maintaining the newly synthesized protein in an open conformation. Functions as a peptidyl-prolyl cis-trans isomerase. The chain is Trigger factor from Aliarcobacter butzleri (strain RM4018) (Arcobacter butzleri).